The sequence spans 312 residues: Serine acetyltransferase 5 (312 aa).

Residues 1–17 (MPPAGELRHQSPSKEKL) are compositionally biased toward basic and acidic residues. Residues 1 to 25 (MPPAGELRHQSPSKEKLSSVTQSDE) form a disordered region.

The protein belongs to the transferase hexapeptide repeat family. Homomultimer. In terms of tissue distribution, mostly expressed in stems, flowers and siliques. Localized in vascular tissues, particularly in phloem.

It localises to the cytoplasm. The enzyme catalyses L-serine + acetyl-CoA = O-acetyl-L-serine + CoA. It functions in the pathway amino-acid biosynthesis; L-cysteine biosynthesis; L-cysteine from L-serine: step 1/2. With respect to regulation, feedback inhibitions by L-Ser and acetyl-CoA. This Arabidopsis thaliana (Mouse-ear cress) protein is Serine acetyltransferase 5 (SAT5).